Reading from the N-terminus, the 125-residue chain is Transposase for transposon Tn554 (125 aa).

Its function is as follows. One of three proteins encoded by transposon Tn554 required for its transposition. This Staphylococcus aureus (strain Mu50 / ATCC 700699) protein is Transposase for transposon Tn554 (tnpC1).